The chain runs to 514 residues: Ubiquitin carboxyl-terminal hydrolase 22 (514 aa).

Residues 10–127 (PGCAHLGSFK…KEEQRKAWKM (118 aa)) form a UBP-type zinc finger. Zn(2+)-binding residues include Cys-12, His-14, Cys-52, Cys-55, Cys-65, Cys-68, Cys-73, His-78, His-82, His-88, Cys-101, and Cys-104. Lys-118 carries the N6-acetyllysine modification. Thr-136 carries the post-translational modification Phosphothreonine. Residues 165–509 (RGLINLGNTC…EGYLLFYHKQ (345 aa)) enclose the USP domain. Cys-174 functions as the Nucleophile in the catalytic mechanism. Ser-226 carries the post-translational modification Phosphoserine. His-468 acts as the Proton acceptor in catalysis.

The protein belongs to the peptidase C19 family. UBP8 subfamily. Component of some SAGA transcription coactivator-HAT complexes, at least composed of ATXN7, ATXN7L3, ENY2, GCN5L2, SUPT3H, TAF10, TRRAP and USP22. Within the SAGA complex, ATXN7L3, ENY2 and USP22 form a subcomplex required for histone deubiquitination. Interacts directly with ATXN7L3; leading to its recruitment to the SAGA complex. Interacts with ATXN7L3 and weakly with ATXN7L3B. Interacts with MED1. Phosphorylated in G2/M phase, but not in G1 phase by CDK1. In terms of processing, ubiquitinated and subsequently degraded in a CDC20-dependent manner.

It localises to the nucleus. Its subcellular location is the cytoplasm. The enzyme catalyses Thiol-dependent hydrolysis of ester, thioester, amide, peptide and isopeptide bonds formed by the C-terminal Gly of ubiquitin (a 76-residue protein attached to proteins as an intracellular targeting signal).. Its function is as follows. Deubiquitinase that plays a role in several cellular processes including transcriptional regulation, cell cycle progression or innate immunity. As part of the transcription regulatory histone acetylation (HAT) complex SAGA, catalyzes the deubiquitination of both histones H2A and H2B, thereby acting as a transcriptional coactivator. Recruited to specific gene promoters by activators such as MYC, where it is required for transcription. Facilitates cell-cycle progression by stabilizing CCNB1 and antagonizing its proteasome-mediated degradation in a cell cycle-specific manner. Modulates cell cycle progression and apoptosis also by antagonizing TP53 transcriptional activation through deacetylase SIRT1 stabilization. Plays multiple roles in immunity and inflammation. Participates in antiviral response by deubiquitinating the importin KPNA2, leading to IRF3 nuclear translocation and subsequent type I interferon production. Acts as a central regulator of type III IFN signaling by negatively regulating STING1 activation and ubiquitination. Inhibits NLRP3 inflammasome activation by promoting NLRP3 degradation through ATG5-dependent autophagy. Deubiquitinates CD274 to induce its stabilization and thereby participates in maintenance of immune tolerance to self. Controls necroptotic cell death by regulating RIPK3 phosphorylation and ubiquitination. During bacterial infection, promotes pro-inflammatory response by targeting TRAF6 and removing its 'Lys-48'-linked polyubiquitination. In Bos taurus (Bovine), this protein is Ubiquitin carboxyl-terminal hydrolase 22 (USP22).